The sequence spans 341 residues: tRNA N6-adenosine threonylcarbamoyltransferase (341 aa).

H115 and H119 together coordinate Fe cation. Residues 137-141, D170, G183, D187, and N276 contribute to the substrate site; that span reads IVSGG. Residue D304 coordinates Fe cation.

The protein belongs to the KAE1 / TsaD family. The cofactor is Fe(2+).

Its subcellular location is the cytoplasm. The catalysed reaction is L-threonylcarbamoyladenylate + adenosine(37) in tRNA = N(6)-L-threonylcarbamoyladenosine(37) in tRNA + AMP + H(+). Its function is as follows. Required for the formation of a threonylcarbamoyl group on adenosine at position 37 (t(6)A37) in tRNAs that read codons beginning with adenine. Is involved in the transfer of the threonylcarbamoyl moiety of threonylcarbamoyl-AMP (TC-AMP) to the N6 group of A37, together with TsaE and TsaB. TsaD likely plays a direct catalytic role in this reaction. This chain is tRNA N6-adenosine threonylcarbamoyltransferase, found in Staphylococcus aureus (strain JH1).